The primary structure comprises 200 residues: MAGLKQHSGLVVPLDAANVDTDAIIPKQFLQAITRVGFGKHLFHEWRYLDAEETQPNPEFVLNFPQYQGASILLARKNLGCGSSREHAPWALADYGFKVMIAPSFADIFYNNSLNNHMLPIKLSEQEVEEIFQWVWANPGKKIDVDLEAKTVTVGEKVYHFDLDEFRRHCLLEGLDNIGLTLQHEDAIAAYESKIPAFLR.

Belongs to the LeuD family. LeuD type 1 subfamily. As to quaternary structure, heterodimer of LeuC and LeuD.

It carries out the reaction (2R,3S)-3-isopropylmalate = (2S)-2-isopropylmalate. The protein operates within amino-acid biosynthesis; L-leucine biosynthesis; L-leucine from 3-methyl-2-oxobutanoate: step 2/4. Its function is as follows. Catalyzes the isomerization between 2-isopropylmalate and 3-isopropylmalate, via the formation of 2-isopropylmaleate. The protein is 3-isopropylmalate dehydratase small subunit 2 of Mannheimia succiniciproducens (strain KCTC 0769BP / MBEL55E).